An 866-amino-acid polypeptide reads, in one-letter code: MTETRTTCPYCGVGCGVIASRAPHGQVSVRGDEQHPANFGRLCVKGAALGETVGLEGRMLFPEVDGERATWPQALAAAGSRLREIIDRHGPQAVAFYASGQLLTEDYYAANKLMKGFIGAANIDTNSRLCMSSAVTGYKRALGADVVPCSYEDVENSDLVVLVGSNAAWAHPVLYQRLAQAKRDNPQMRVVVIDPRRTATCDIADRHLALAPGSDGGLFVGLLNAIAASGAISDDFNDAQRALTIAQDWDLDKVAQFCGLPRQQIADFYREFIAAPRAITLYTMGINQSASGSDKCNAIINVHLACGKYGRPGCGPFSLTGQPNAMGGREVGGLATMLAAHMNFEPDDLRRLARFWGSERLAQTPGLTGVELFAAIGRGEVKAVWIMGTNPVVSLPDSHAVSEALARCPLVIISDVVADTDTGRFAHIRFPALAWGEKSGTVTNSERRISRQRAFMPPPGEARADWWIVARVAEALGFGSAFAWQHPHEVFSEHAALSGYENDGQRAFDIGGLADLSREAWDALEPVRWPVSRSEAAWSVHKGWHRDGKLRMVPVAPQPTRATTDAFYPLILNSGRIRDQWHTMTRTGAVPRLMQHINEPVVEVAPADAQRYHLLEGELARVRSPKGVMVAKVTIGDGQRPGSLFVPMHWNNQFARQGRVNNLLAAVTDPHSGQPESKQTAVAIATWLPAWKGELFSRQPVPLPASLHWRRRAAQGIIHLSLAGDTRSRDWLVEWCQRQGWQMQVAEGGKVWNLLAWRAGELMLGWWSDASEPAIDADWIHAAFRVPPQNAARRHALLSGRKGGVEMPRGRIICSCFSVGERAIGEAIAGGCRTPGALGGKLKCGTNCGSCIPELKALLAAKLAQA.

In terms of domain architecture, 4Fe-4S Mo/W bis-MGD-type spans 1 to 57 (MTETRTTCPYCGVGCGVIASRAPHGQVSVRGDEQHPANFGRLCVKGAALGETVGLEG). Cys-8, Cys-11, Cys-15, and Cys-43 together coordinate [4Fe-4S] cluster.

The protein belongs to the prokaryotic molybdopterin-containing oxidoreductase family. NasA/NapA/NarB subfamily. [4Fe-4S] cluster serves as cofactor. The cofactor is Mo-bis(molybdopterin guanine dinucleotide).

Its pathway is nitrogen metabolism; nitrate reduction (denitrification); dinitrogen from nitrate: step 1/4. In terms of biological role, nitrate reductase is a key enzyme involved in the first step of nitrate assimilation in plants, fungi and bacteria. The protein is Nitrate reductase (nasA) of Klebsiella oxytoca.